A 234-amino-acid chain; its full sequence is Purine nucleoside phosphorylase DeoD-type (234 aa).

H4 provides a ligand contact to a purine D-ribonucleoside. Phosphate contacts are provided by residues G20, R24, R43, and 87 to 90 (RVGT). Residues 179 to 181 (EME) and 203 to 204 (SN) contribute to the a purine D-ribonucleoside site.

The protein belongs to the PNP/UDP phosphorylase family. In terms of assembly, homohexamer; trimer of homodimers.

It carries out the reaction a purine D-ribonucleoside + phosphate = a purine nucleobase + alpha-D-ribose 1-phosphate. It catalyses the reaction a purine 2'-deoxy-D-ribonucleoside + phosphate = a purine nucleobase + 2-deoxy-alpha-D-ribose 1-phosphate. Its function is as follows. Catalyzes the reversible phosphorolytic breakdown of the N-glycosidic bond in the beta-(deoxy)ribonucleoside molecules, with the formation of the corresponding free purine bases and pentose-1-phosphate. The sequence is that of Purine nucleoside phosphorylase DeoD-type from Latilactobacillus sakei subsp. sakei (strain 23K) (Lactobacillus sakei subsp. sakei).